We begin with the raw amino-acid sequence, 61 residues long: MFSELINFQNEGHECQCQCGSCKNNEQCQKSCSCPTGCNSDDKCPCGNKSEETKKSCCSGK.

Positions 1 to 8 (MFSELINF) are excised as a propeptide. Positions 15, 17, 19, 22, and 28 each coordinate Cu cation. Lysine 30 participates in a covalent cross-link: Glycyl lysine isopeptide (Lys-Gly) (interchain with G-Cter in ubiquitin). Residues cysteine 32, cysteine 34, cysteine 38, cysteine 44, and cysteine 46 each contribute to the Cu cation site. Positions 37-61 (GCNSDDKCPCGNKSEETKKSCCSGK) are disordered. Residues 40–55 (SDDKCPCGNKSEETKK) are compositionally biased toward basic and acidic residues.

The protein belongs to the metallothionein superfamily. Type 12 family.

Protects the cell against copper toxicity by tightly chelating copper ions. May also act as a depository for copper designated for the effective transfer into the apo forms of copper proteins. This is Copper metallothionein 1-1 (CUP1-1) from Saccharomyces cerevisiae (strain ATCC 204508 / S288c) (Baker's yeast).